Reading from the N-terminus, the 1136-residue chain is MAKKEVKSSLLDNMIGVGDTVLLEPLNEETFIDNLKKRFDHNEIYTYIGSVVISVNPYRSLPIYSPEKVEDYRNRNFYELSPHIFALSDEAYRSLRDQDKDQCILITGESGAGKTEASKLVMSYVAAVCGKGAEVNQVKEQLLQSTPVLEAFGNAKTVRNDNSSRFGKYMDIEFDFKGDPLGGVISNYLLEKSRVVKQPRGERNFHVFYQLLSGASEELLHKLKLERDFSRYNYLSLDSAKVNGVDDAANFRTVRNAMQIVGFSDPEAESVLEVVAAVLKLGNIEFKPESRMNGLDESKIKDKNELKEICELTSIDQVVLERAFSFRTVEAKQEKVSTTLNVAQAYYARDALAKNLYSRLFSWLVNRINESIKAQTKVRKKVMGVLDIYGFEIFEDNSFEQFIINYCNEKLQQIFIELTLKEEQEEYIREDIEWTHIDYFNNAIICDLIENNTNGILAMLDEECLRPGTVTDETFLEKLNQVCATHQHFESRMSKCSRFLNDTTLPHSCFRIQHYAGKVLYQVEGFVDKNNDLLYRDLSQAMWKAGHALIKSLFPEGNPAKVNLKRPPTAGSQFKASVATLMKNLQTKNPNYIRCIKPNDKKAAHIFSESLVCHQIRYLGLLENVRVRRAGYAFRQAYEPCLERYKMLCKQTWPHWKGPARSGVEVLFNELEIPVEEYSFGRSKIFIRNPRTLFQLEDLRKQRLEDLATLIQKIYRGWKCRTHFLLMKRSQVVIAAWYRRYAQQKRYQQIKSSALVIQSYIRGWKARKILRELKHQKRCKEAATTIAAYWHGTQARKERRRLKDEARNKHAIAVIWAFWLGSKARRELKRLKEEARRKHAVAVIWAYWLGLKVRREYRKFFRANAGKKIYEFTLQRIVQKYLLEMKNKMPSLSPIDKNWPSRPYLFLDSTHKELKRIFHLWRCKKYRDQFTDQQKLIYEEKLEASELFKDKKALYPSSVGQPFQGAYLEINKNPKYKKLKDAIEEKIIIAEVVNKINRANGKSTSRIFLLTNNNLLLADQKSGQIKSEVPLVDVTKVSMSSQNDGFFAVHLKEGSEAASKGDFLFSSDHLIEMATKLYRTTLSQTKQKLNIEISDEFLVQFRQDKVCVKFIQGNQKNGSVPTCKRKNNRLLEVAVP.

Positions 15–701 (IGVGDTVLLE…TLFQLEDLRK (687 aa)) constitute a Myosin motor domain. Phosphoserine is present on serine 60. Residue 108–115 (GESGAGKT) participates in ATP binding. Lysine 287 participates in a covalent cross-link: Glycyl lysine isopeptide (Lys-Gly) (interchain with G-Cter in SUMO1); alternate. A Glycyl lysine isopeptide (Lys-Gly) (interchain with G-Cter in SUMO2); alternate cross-link involves residue lysine 287. Positions 592 to 599 (YIRCIKPN) are actin-binding. 6 consecutive IQ domains span residues 704–729 (LEDLATLIQKIYRGWKCRTHFLLMKR), 730–750 (SQVVIAAWYRRYAQQKRYQQI), 750–778 (IKSSALVIQSYIRGWKARKILRELKHQKR), 780–807 (KEAATTIAAYWHGTQARKERRRLKDEAR), 808–837 (NKHAIAVIWAFWLGSKARRELKRLKEEARR), and 837–866 (RKHAVAVIWAYWLGLKVRREYRKFFRANAG). Residues 952 to 1136 (KALYPSSVGQ…NNRLLEVAVP (185 aa)) enclose the TH1 domain.

It belongs to the TRAFAC class myosin-kinesin ATPase superfamily. Myosin family.

Motor protein that may participate in process critical to neuronal development and function such as cell migration, neurite outgrowth and vesicular transport. In Rattus norvegicus (Rat), this protein is Unconventional myosin-Ib (Myo1b).